A 391-amino-acid polypeptide reads, in one-letter code: Nucleosome assembly protein 1-like 1 (391 aa).

Over residues 1 to 10 (MADIDNKEQS) the composition is skewed to basic and acidic residues. The segment at 1-32 (MADIDNKEQSELDQDLDDVEEVEEEETGEETK) is disordered. An N-acetylalanine modification is found at Ala-2. Phosphoserine is present on Ser-10. Residues 11-28 (ELDQDLDDVEEVEEEETG) are compositionally biased toward acidic residues. Phosphothreonine is present on residues Thr-62 and Thr-64. The residue at position 69 (Ser-69) is a Phosphoserine. An N6-acetyllysine modification is found at Lys-116. An NAP1L motif motif is present at residues 125 to 150 (YEPTEEECEWKPDEEDEISEELKEKA). The segment covering 132-143 (CEWKPDEEDEIS) has biased composition (acidic residues). The interval 132 to 163 (CEWKPDEEDEISEELKEKAKIEDEKKDEEKED) is disordered. A Phosphoserine modification is found at Ser-143. A compositionally biased stretch (basic and acidic residues) spans 144–163 (EELKEKAKIEDEKKDEEKED). The short motif at 273–279 (IKKKQKH) is the Nuclear localization signal element. The span at 346 to 376 (AIEDDDDDYDEEGEEADEEGEEEGDEENDPD) shows a compositional bias: acidic residues. The segment at 346–391 (AIEDDDDDYDEEGEEADEEGEEEGDEENDPDYDPKKDQNPAECKQQ) is disordered. A 5-glutamyl polyglycine mark is found at Glu-359 and Glu-360. Over residues 377 to 391 (YDPKKDQNPAECKQQ) the composition is skewed to basic and acidic residues. At Cys-388 the chain carries Cysteine methyl ester. A lipid anchor (S-farnesyl cysteine) is attached at Cys-388. Residues 389–391 (KQQ) constitute a propeptide, removed in mature form.

Belongs to the nucleosome assembly protein (NAP) family. In terms of assembly, homodimer. The dimer binds strongly and sequentially to single and double H2A-H2B heterodimers. Interacts with ERCC6; this interaction increases ERCC6 processivity. Interacts with RAD54. Interacts with SETD1A. Polyglycylated by TTLL10 on glutamate residues, resulting in polyglycine chains on the gamma-carboxyl group. Both polyglutamylation and polyglycylation modifications can coexist on the same protein on adjacent residues, and lowering polyglycylation levels increases polyglutamylation, and reciprocally. In terms of processing, polyglutamylated by TTLL4 on glutamate residues, resulting in polyglutamate chains on the gamma-carboxyl group. Both polyglutamylation and polyglycylation modifications can coexist on the same protein on adjacent residues, and lowering polyglycylation levels increases polyglutamylation, and reciprocally.

The protein resides in the nucleus. Its subcellular location is the melanosome. It is found in the cytoplasm. Its function is as follows. Histone chaperone that plays a role in the nuclear import of H2A-H2B and nucleosome assembly. Also participates in several important DNA repair mechanisms: greatly enhances ERCC6-mediated chromatin remodeling which is essential for transcription-coupled nucleotide excision DNA repair. Also stimulates homologous recombination (HR) by RAD51 and RAD54 which is essential in mitotic DNA double strand break (DSB) repair. Plays a key role in the regulation of embryonic neurogenesis. Promotes the proliferation of neural progenitors and inhibits neuronal differentiation during cortical development. Regulates neurogenesis via the modulation of RASSF10; regulates RASSF10 expression by promoting SETD1A-mediated H3K4 methylation at the RASSF10 promoter. This Pongo abelii (Sumatran orangutan) protein is Nucleosome assembly protein 1-like 1 (NAP1L1).